We begin with the raw amino-acid sequence, 745 residues long: MEVMNLIEQPIKVTEWQQTYTYDSGIHSGANTCVPSVSSKGLMEEDEACGRQYTLKKTTTYTQAVPQSQGDLEYQMSTTARAKRVREAMCPGVTGEDSSLLLATQVEGQTTNLQRLAEPSQLLKSAIVHLINYQDDAELATRALPELTKLLNDEDPVVVTKAAMIVNQLSKKEASRRALMGSPQLVAAVVRTMQNTSDLDTARCTTSILHNLSHHREGLLAIFKSGGIPALVRMLSSPVESVLFYAITTLHNLLLYQEGAKMAVRLADGLQKMVPLLNKNNPKFLAITTDCLQLLAYGNQESKLIILANGGPQALVQIMRNYSYEKLLWTTSRVLKVLSVCPSNKPAIVEAGGMQALGKHLTSNSPRLVQNCLWTLRNLSDVATKQEGLESVLKILVNQLSVDDVNVLTCATGTLSNLTCNNSKNKTLVTQNSGVEALIHAILRAGDKDDITEPAVCALRHLTSRHPEAEMAQNSVRLNYGIPAIVKLLNQPNQWPLVKATIGLIRNLALCPANHAPLQEASVIPRLVQLLVKAHQDAQRHVAAGTQQPYTDGVRMEEIVEGCTGALHILARDPMNRMEIFRLNTIPLFVQLLYSSVENIQRVAAGVLCELAQDKEAADAIDAEGASSPLMELLHSRNEGTATYAAAVLFRISEDKNPDYRKRVSVELTNSLFKHDPAAWEAAQSMIPINEPYADDMDATYRPMYSSDVPLDPLEMHMDMDGDYPMDTYSDGLRPPYPAADHMLA.

Met1 is subject to N-acetylmethionine. A glycan (O-linked (GlcNAc) threonine) is linked at Thr14. Ser99 and Ser125 each carry phosphoserine. 12 ARM repeats span residues 132–171 (NYQD…QLSK), 172–215 (KEAS…LSHH), 216–255 (REGL…NLLL), 258–297 (EGAK…LLAY), 298–341 (GNQE…LSVC), 342–381 (PSNK…NLSD), 383–420 (ATKQ…NLTC), 423–464 (SKNK…HLTS), 470–510 (EMAQ…NLAL), 512–551 (PANH…QPYT), 574–613 (PMNR…ELAQ), and 615–661 (KEAA…PDYR). The interval 132–297 (NYQDDAELAT…TTDCLQLLAY (166 aa)) is interaction with DSC1 and DSG1. Ser182 carries the post-translational modification Phosphoserine. The interaction with DSC1 stretch occupies residues 574–661 (PMNRMEIFRL…ISEDKNPDYR (88 aa)). Residues Ser665 and Ser730 each carry the phosphoserine modification.

It belongs to the beta-catenin family. In terms of assembly, homodimer. Component of an E-cadherin/catenin adhesion complex composed of at least E-cadherin/CDH1 and gamma-catenin/JUP, and possibly alpha-catenin/CTNNA1; the complex is located to adherens junctions. The stable association of CTNNA1 is controversial as CTNNA1 was shown not to bind to F-actin when assembled in the complex. Interacts with MUC1. Interacts with CAV1. Interacts with PTPRJ. Interacts with DSG1. Interacts with DSC1 and DSC2. Interacts with PKP2. Interacts with PKP3 (via N-terminus); the interaction is required for PKP3 localization to desmosome cell-cell junctions. Interacts with DSG4. May be phosphorylated by FER.

Its subcellular location is the cell junction. The protein resides in the adherens junction. It localises to the desmosome. The protein localises to the cytoplasm. It is found in the cytoskeleton. Its subcellular location is the cell membrane. The protein resides in the nucleus. Common junctional plaque protein. The membrane-associated plaques are architectural elements in an important strategic position to influence the arrangement and function of both the cytoskeleton and the cells within the tissue. The presence of plakoglobin in both the desmosomes and in the intermediate junctions suggests that it plays a central role in the structure and function of submembranous plaques. Acts as a substrate for VE-PTP and is required by it to stimulate VE-cadherin function in endothelial cells. Can replace beta-catenin in E-cadherin/catenin adhesion complexes which are proposed to couple cadherins to the actin cytoskeleton. The polypeptide is Junction plakoglobin (Sus scrofa (Pig)).